Reading from the N-terminus, the 363-residue chain is UDP-N-acetylglucosamine--N-acetylmuramyl-(pentapeptide) pyrophosphoryl-undecaprenol N-acetylglucosamine transferase (363 aa).

UDP-N-acetyl-alpha-D-glucosamine is bound by residues 14–16, arginine 171, serine 200, and glutamine 290; that span reads TGG.

The protein belongs to the glycosyltransferase 28 family. MurG subfamily.

The protein localises to the cell inner membrane. It carries out the reaction di-trans,octa-cis-undecaprenyl diphospho-N-acetyl-alpha-D-muramoyl-L-alanyl-D-glutamyl-meso-2,6-diaminopimeloyl-D-alanyl-D-alanine + UDP-N-acetyl-alpha-D-glucosamine = di-trans,octa-cis-undecaprenyl diphospho-[N-acetyl-alpha-D-glucosaminyl-(1-&gt;4)]-N-acetyl-alpha-D-muramoyl-L-alanyl-D-glutamyl-meso-2,6-diaminopimeloyl-D-alanyl-D-alanine + UDP + H(+). It participates in cell wall biogenesis; peptidoglycan biosynthesis. In terms of biological role, cell wall formation. Catalyzes the transfer of a GlcNAc subunit on undecaprenyl-pyrophosphoryl-MurNAc-pentapeptide (lipid intermediate I) to form undecaprenyl-pyrophosphoryl-MurNAc-(pentapeptide)GlcNAc (lipid intermediate II). The protein is UDP-N-acetylglucosamine--N-acetylmuramyl-(pentapeptide) pyrophosphoryl-undecaprenol N-acetylglucosamine transferase of Borreliella burgdorferi (strain ATCC 35210 / DSM 4680 / CIP 102532 / B31) (Borrelia burgdorferi).